A 361-amino-acid chain; its full sequence is Hsc70-interacting protein (361 aa).

The disordered stretch occupies residues 39-98 (GGTIPPAPASTSTDETSKGKAEEQPEEPVKSPEPESEESDLEIDNEGVIEPDNDDPQEMG). Residues 53-71 (ETSKGKAEEQPEEPVKSPE) show a composition bias toward basic and acidic residues. Residues 72–98 (PESEESDLEIDNEGVIEPDNDDPQEMG) show a composition bias toward acidic residues. 3 TPR repeats span residues 112-145 (ANEKKMEAINALSEGDLQKAVNLFTDAIKLNPCL), 147-179 (ILYAKRASVFVKLQKPNAAIRDCDRAIKINPDS), and 181-213 (QTYKWRGKAHRLLGHWEEAAHDLALACKLDYDE). Basic and acidic residues predominate over residues 254–270 (KAREEHERAQREEEARR). Residues 254–292 (KAREEHERAQREEEARRQAGGAQFGGFPGGFPGGFPGAM) are disordered. Gly residues predominate over residues 275–292 (AQFGGFPGGFPGGFPGAM). The region spanning 311–350 (DPEVLAAMQDPEVMAAFQDVAQNPANMSKYQNNPKVMSLI) is the STI1 domain.

It belongs to the FAM10 family. Homotetramer. Interacts with HSC70 as well as DNAJ homologs and HSP90.

Its subcellular location is the cytoplasm. Its function is as follows. One HIP oligomer binds the ATPase domains of at least two HSC70 molecules dependent on activation of the HSC70 ATPase by HSP40. Stabilizes the ADP state of HSC70 that has a high affinity for substrate protein. Through its own chaperone activity, it may contribute to the interaction of HSC70 with various target proteins. The protein is Hsc70-interacting protein (ST13) of Gallus gallus (Chicken).